The sequence spans 46 residues: PhoP/PhoQ regulator MgrB (46 aa).

A helical membrane pass occupies residues 6–26; sequence WVALVVVVLACLLLWAQVFNM.

The protein belongs to the MgrB family. May form homooligomers. Probably interacts with the periplasmic domain of PhoQ.

It is found in the cell inner membrane. PhoP-regulated transcription is redox-sensitive, being activated when the periplasm becomes more reducing. MgrB acts between DsbA/DsbB and PhoP/PhoQ in this pathway. Represses PhoP/PhoQ signaling, possibly by binding to the periplasmic domain of PhoQ, altering its activity and that of downstream effector PhoP. The polypeptide is PhoP/PhoQ regulator MgrB (Escherichia coli O6:K15:H31 (strain 536 / UPEC)).